The primary structure comprises 50 residues: Defensin-like protein 1 (50 aa).

Intrachain disulfides connect Cys-2–Cys-50, Cys-14–Cys-35, Cys-20–Cys-44, and Cys-24–Cys-46.

Belongs to the DEFL family.

The protein localises to the secreted. Its function is as follows. Possesses antimicrobial activity sensitive to inorganic cations. Binds specifically to the fungal plasma membrane. Has no inhibitory effect on insect gut alpha-amylase. In Aesculus hippocastanum (Horse chestnut), this protein is Defensin-like protein 1.